The following is a 276-amino-acid chain: Large ribosomal subunit protein uL2 (276 aa).

Residues 219 to 276 (TVRGSVMNPNDHPHGGGEGRAPIGRKSPMSPWGKPTLGYKTRQRNKPSDKYIVRKRKK) form a disordered region.

The protein belongs to the universal ribosomal protein uL2 family. In terms of assembly, part of the 50S ribosomal subunit. Forms a bridge to the 30S subunit in the 70S ribosome.

Its function is as follows. One of the primary rRNA binding proteins. Required for association of the 30S and 50S subunits to form the 70S ribosome, for tRNA binding and peptide bond formation. It has been suggested to have peptidyltransferase activity; this is somewhat controversial. Makes several contacts with the 16S rRNA in the 70S ribosome. The chain is Large ribosomal subunit protein uL2 from Oceanobacillus iheyensis (strain DSM 14371 / CIP 107618 / JCM 11309 / KCTC 3954 / HTE831).